The following is a 165-amino-acid chain: Phosphopantetheine adenylyltransferase (165 aa).

T10 contributes to the substrate binding site. ATP is bound by residues 10 to 11 (TF) and H18. Substrate contacts are provided by K42, L75, and R89. Residues 90–92 (GLR), E100, and 125–131 (YTYVASS) each bind ATP.

The protein belongs to the bacterial CoaD family. Homohexamer. Requires Mg(2+) as cofactor.

Its subcellular location is the cytoplasm. It carries out the reaction (R)-4'-phosphopantetheine + ATP + H(+) = 3'-dephospho-CoA + diphosphate. The protein operates within cofactor biosynthesis; coenzyme A biosynthesis; CoA from (R)-pantothenate: step 4/5. Reversibly transfers an adenylyl group from ATP to 4'-phosphopantetheine, yielding dephospho-CoA (dPCoA) and pyrophosphate. This chain is Phosphopantetheine adenylyltransferase, found in Chlorobium phaeobacteroides (strain BS1).